The sequence spans 163 residues: Protein NAG1 (163 aa).

The chain crosses the membrane as a helical span at residues 76 to 96 (ACFSVRIVLPLSLTISISALM).

Its subcellular location is the membrane. In terms of biological role, involved in yeast cell wall biogenesis. The sequence is that of Protein NAG1 (NAG1) from Saccharomyces cerevisiae (strain ATCC 204508 / S288c) (Baker's yeast).